The following is a 453-amino-acid chain: tRNA modification GTPase MnmE (453 aa).

(6S)-5-formyl-5,6,7,8-tetrahydrofolate-binding residues include R22, E79, and K119. A TrmE-type G domain is found at 215–376; the sequence is GMKVVIAGRP…LKQHLKSLMG (162 aa). N225 contributes to the K(+) binding site. Residues 225–230, 244–250, 269–272, and 334–337 contribute to the GTP site; these read NAGKSS, TEIAGTT, DTAG, and NKAD. S229 is a binding site for Mg(2+). T244, I246, and T249 together coordinate K(+). T250 lines the Mg(2+) pocket. Residue K453 participates in (6S)-5-formyl-5,6,7,8-tetrahydrofolate binding.

It belongs to the TRAFAC class TrmE-Era-EngA-EngB-Septin-like GTPase superfamily. TrmE GTPase family. As to quaternary structure, homodimer. Heterotetramer of two MnmE and two MnmG subunits. K(+) serves as cofactor.

Its subcellular location is the cytoplasm. Exhibits a very high intrinsic GTPase hydrolysis rate. Involved in the addition of a carboxymethylaminomethyl (cmnm) group at the wobble position (U34) of certain tRNAs, forming tRNA-cmnm(5)s(2)U34. The chain is tRNA modification GTPase MnmE from Shewanella baltica (strain OS185).